The chain runs to 391 residues: O-methyltransferase ATR12 (391 aa).

S-adenosyl-L-methionine is bound by residues 233 to 234, aspartate 259, and 279 to 280; these read GG and DF. Histidine 299 functions as the Proton acceptor in the catalytic mechanism.

The protein belongs to the class I-like SAM-binding methyltransferase superfamily. Cation-independent O-methyltransferase family. COMT subfamily.

It functions in the pathway mycotoxin biosynthesis. Functionally, O-methyltransferase; part of the core atranone cluster (CAC) which products are predicted to catalyze most or all steps of mycotoxin atranone synthesis, starting from geranylgeranyl pyrophosphate (GGPP). The initial cyclization of GGPP to dolabellane is probably performed by the terpene cyclase ATR13. The Baeyer-Villiger oxidation near the end of the atranone synthesis, which converts atranones D and E to atranones F and G is predicted to be catalyzed by the monooxygenase ATR8. Of the CAC's other predicted gene products, the reducing PKS ATR6 might synthesize a polyketide chain. This polyketide is probably transferred onto the atranone backbone by the polyketide transferase ATR5. Other predicted CAC products include 4 oxygenases (ATR2, ATR3, ATR4, and ATR14), 3 short-chain reductases (ATR7, ATR9, and ATR10), and a methyltransferase (ATR12). These may all be involved in the various steps of atranone biosynthesis, although their specific roles must await experimental determination. This chain is O-methyltransferase ATR12, found in Stachybotrys chlorohalonatus (strain IBT 40285).